Here is a 357-residue protein sequence, read N- to C-terminus: GDP-polyphosphate phosphotransferase (357 aa).

The tract at residues 1–83 is disordered; it reads MSEEPTVSPP…DSTSASLPAN (83 aa). The segment covering 14 to 25 has biased composition (low complexity); that stretch reads QPAAQPAKPARP. Positions 26 to 40 are enriched in basic residues; that stretch reads AARRAPRKPATRRPR.

The protein belongs to the polyphosphate kinase 2 (PPK2) family. Class I subfamily. Homotetramer. Also forms octamers. It depends on Mg(2+) as a cofactor. Requires Mn(2+) as cofactor.

It carries out the reaction [phosphate](n) + GTP = [phosphate](n+1) + GDP. It catalyses the reaction [phosphate](n) + ATP = [phosphate](n+1) + ADP. Uses inorganic polyphosphate (polyP) as a donor to convert GDP to GTP and ADP to ATP. Shows a preference for GDP. Can also catalyze the synthesis of polyP from GTP or ATP, but the rate of polyP utilization is 75-fold greater than the rate of polyP synthesis. This Pseudomonas aeruginosa (strain ATCC 15692 / DSM 22644 / CIP 104116 / JCM 14847 / LMG 12228 / 1C / PRS 101 / PAO1) protein is GDP-polyphosphate phosphotransferase.